Here is a 550-residue protein sequence, read N- to C-terminus: Pectinesterase 2.2 (550 aa).

N-linked (GlcNAc...) asparagine glycosylation occurs at Asn179. Thr312 and Gln342 together coordinate substrate. Cysteines 331 and 358 form a disulfide. The Proton donor role is filled by Asp365. The active-site Nucleophile is the Asp386. Cysteines 399 and 433 form a disulfide. Substrate contacts are provided by Arg454 and Trp456.

The protein in the N-terminal section; belongs to the PMEI family. In the C-terminal section; belongs to the pectinesterase family.

Its subcellular location is the secreted. It is found in the cell wall. It carries out the reaction [(1-&gt;4)-alpha-D-galacturonosyl methyl ester](n) + n H2O = [(1-&gt;4)-alpha-D-galacturonosyl](n) + n methanol + n H(+). The protein operates within glycan metabolism; pectin degradation; 2-dehydro-3-deoxy-D-gluconate from pectin: step 1/5. Pectinesterase may play a role in cell wall metabolism during fruit growth and development prior to ripening and may be required for preparing cell walls for softening by polygalacturonase during fruit ripening. The sequence is that of Pectinesterase 2.2 (PME2.2) from Solanum lycopersicum (Tomato).